A 288-amino-acid chain; its full sequence is Programmed cell death protein 1 (288 aa).

The N-terminal stretch at 1-24 is a signal peptide; it reads MWVRQVPWSFTWAVLQLSWQSGWL. At 25–169 the chain is on the extracellular side; sequence LEVPNGPWRS…PKPEGRFQGM (145 aa). Positions 31-139 constitute an Ig-like V-type domain; the sequence is PWRSLTFYPA…PKAKIEESPG (109 aa). N-linked (GlcNAc...) asparagine glycosylation is found at Asn49, Asn58, Asn74, and Asn116. Cys54 and Cys123 are oxidised to a cystine. An interaction with CD274/PDCD1L1 region spans residues 70 to 77; that stretch reads LSPSNQTE. The chain crosses the membrane as a helical span at residues 170 to 190; sequence VIGIMSALVGIPVLLLLAWAL. Over 191-288 the chain is Cytoplasmic; the sequence is AVFCSTSMSE…HEDGHCSWPL (98 aa). Positions 223–228 match the ITIM motif motif; it reads VAYEEL. At Tyr225 the chain carries Phosphotyrosine. Lys235 is covalently cross-linked (Glycyl lysine isopeptide (Lys-Gly) (interchain with G-Cter in ubiquitin)). Thr236 carries the phosphothreonine; by MAPK3 modification. The ITSM motif motif lies at 247-251; the sequence is EYATI. A Phosphotyrosine modification is found at Tyr248. The disordered stretch occupies residues 263-288; the sequence is GRRGSADGLQGPRPPRHEDGHCSWPL. The span at 277–288 shows a compositional bias: basic and acidic residues; sequence PRHEDGHCSWPL.

As to quaternary structure, monomer. Interacts with CD274/PDCD1L1. Interacts with CD273/PDCD1LG2. Interacts with FBXO38; leading to ubiquitination and degradation by the proteasome. Ubiquitinated at Lys-235 by the SCF(FBXO38) complex, leading to its proteasomal degradation. Ubiquitinated via 'Lys-48'-linked polyubiquitin chains. Deubiquitinated and thus stabilized by USP5. Post-translationally, tyrosine phosphorylated at Tyr-225 (within ITIM motif) and Tyr-248 (ITSM motif) upon ligand binding. Phosphorylation at Tyr-248 promotes the recruitment of the protein tyrosine phosphatase PTPN11/SHP-2 that mediates dephosphorylation of key TCR proximal signaling molecules, such as ZAP70, PRKCQ/PKCtheta and CD247/CD3zeta. Phosphorylation at Thr-236 promotes the recruitment of the deubiquitinase USP5. Thymus-specific.

The protein localises to the cell membrane. Its function is as follows. Inhibitory receptor on antigen activated T-cells that plays a critical role in induction and maintenance of immune tolerance to self. Delivers inhibitory signals upon binding to ligands, such as CD274/PDCD1L1 and CD273/PDCD1LG2. Following T-cell receptor (TCR) engagement, PDCD1 associates with CD3-TCR in the immunological synapse and directly inhibits T-cell activation. Suppresses T-cell activation through the recruitment of PTPN11/SHP-2: following ligand-binding, PDCD1 is phosphorylated within the ITSM motif, leading to the recruitment of the protein tyrosine phosphatase PTPN11/SHP-2 that mediates dephosphorylation of key TCR proximal signaling molecules, such as ZAP70, PRKCQ/PKCtheta and CD247/CD3zeta. The PDCD1-mediated inhibitory pathway is exploited by tumors to attenuate anti-tumor immunity and facilitate tumor survival. The protein is Programmed cell death protein 1 of Mus musculus (Mouse).